We begin with the raw amino-acid sequence, 1444 residues long: MDIVRMGSVASGGGSVRRTASSWRGTSGRSDAFGRSVREEDDEEALKWAAIEKLPTYDRMRKGILTAGGVEEVDIGGLGLQERRNLIERLVRTAEEDNERFLLKLRDRMERVGIDNPTIEVRFENLSIDAEAYVGNRGIPTFTNFFSNKIMDVLSAMRIVSSGKRPISILHDISGIIRPGRMSLLLGPPGSGKTSLLLALAGKLDSTLKVSGRVTYNGHDMDEFVPQRTSAYIGQHDLHIGEMTVRETLAFSARCQGVGTRYDMLTELSRREKEASIKPDPDIDVYMKAISVEGQESVVTDYILKILGLEICADTMVGDAMIRGISGGQKKRVTTGEMLVGPAKALFMDEISTGLDSSTTYQIVNSLRQSVHILGGTALIALLQPAPETYDLFDDIVLLSEGQIVYQGPRENILEFFEAMGFKCPERKGVADFLQEVTSRKDQHQYWCRRDEPYRYISVNDFSEAFKEFHVGRNLGSELRVPFDRTRNHPAALTTSRYGISKMELTKACFSREWLLMKRNSFVYIFKILQLIILGSIGMTVFLRTKMHRRSVEDGAIFLGAMFLGLVTHLFNGFAELAMSIAKLPIFYKQRDLLFYPSWAYALPTWVLKIPISFLECAVWICMTYYVMGFDPNIERFFRHYVLLVLISQMASGLFRLLAALGREMVVADTFGSFAQLILLVLGGFLISRENIKKWWIWGYWSSPLMYAQNAIAVNEFLGHSWNKVVDPTQSNDTLGVQVLKVRGIFVDANWYWIGVGALLGYIMLFNILFILFLEWLDPLGKGQAVVSEEELREKHVNRTGENVELLTLGTDSQNSPSDANAGRGEITGADTRKRGMVLPFTPLSITFDNIRYSVDMPQEMKDKGVTEDRLLLLKGVSGAFRPGVLTALMGVSGAGKTTLMDVLAGRKTGGYIEGDISISGYPKKQETFARIAGYCEQNDIHSPHVTVYESLLYSAWLRLPSEVDSEARKMFVEEVMELVELTSLRGALVGLPGVNGLSTEQRKRLTIAVELVANPSIIFMDEPTSGLDARAAAIVMRTVRNTVDTGRTVVCTIHQPSIDIFEAFDELFLMKRGGEEIYVGPLGHNSCHLINYFEGIQGVRKIKDGYNPATWMLEVTTLAQEDILGINFAEVYRNSDLYQRNKTLISELSTPPPGSTDLHFPTQFSQPFFTQCMACLWKQHKSYWRNPSYTATRIFFTTVIALIFGTIFLNLGKKINKRLDLFNSLGSMYAAVLFIGIQNGQTVQPIVDVERTVFYREKAAGMYSALPYAFAQVLIEIPHIFLQTVVYGLIVYSLIGFDWTVEKFFWYMFFMFFTFMYFTFYGMMAVAMTPNSDIAAIVSTAFYCIWNIFAGFLIPRPRIPIWWRWYSWACPVAWTLYGLVASQYGDITNSTLEDGEVVQDYIRRYFGFRHDYLGYVATAVVGFAALFAFVFAFSIKVFNFQRR.

The disordered stretch occupies residues Met-1 to Ser-36. Polar residues predominate over residues Thr-19 to Arg-29. An ABC transporter 1 domain is found at Leu-154–Glu-426. ATP is bound at residue Gly-187–Thr-194. The ABC transmembrane type-2 1 domain maps to Glu-504–Phe-717. Transmembrane regions (helical) follow at residues Phe-522 to Phe-542, Gly-555 to Ala-575, Ile-610 to Phe-630, Val-642 to Gly-662, Val-667 to Ile-687, and Ile-754 to Leu-774. The 253-residue stretch at Ile-846–Gln-1098 folds into the ABC transporter 2 domain. Gly-891–Thr-898 contacts ATP. The region spanning Thr-1171–Tyr-1385 is the ABC transmembrane type-2 2 domain. 7 helical membrane passes run Ala-1192 to Leu-1212, Leu-1220 to Asn-1240, Ile-1278 to Phe-1298, Phe-1305 to Met-1325, Ile-1335 to Ile-1355, Ile-1362 to Ala-1382, and Leu-1414 to Phe-1434.

It belongs to the ABC transporter superfamily. ABCG family. PDR (TC 3.A.1.205) subfamily.

Its subcellular location is the membrane. Its function is as follows. May be a general defense protein. This is ABC transporter G family member 39 from Oryza sativa subsp. japonica (Rice).